The chain runs to 220 residues: dITP/XTP pyrophosphatase (220 aa).

Ser-13–Lys-18 is a substrate binding site. 2 residues coordinate Mg(2+): Asp-45 and Asp-74. The active-site Proton acceptor is Asp-74. Substrate contacts are provided by residues Ser-75, Phe-163–Asp-166, Lys-186, and His-199–Arg-200.

Belongs to the HAM1 NTPase family. In terms of assembly, homodimer. It depends on Mg(2+) as a cofactor.

The catalysed reaction is XTP + H2O = XMP + diphosphate + H(+). The enzyme catalyses dITP + H2O = dIMP + diphosphate + H(+). It carries out the reaction ITP + H2O = IMP + diphosphate + H(+). Pyrophosphatase that catalyzes the hydrolysis of nucleoside triphosphates to their monophosphate derivatives, with a high preference for the non-canonical purine nucleotides XTP (xanthosine triphosphate), dITP (deoxyinosine triphosphate) and ITP. Seems to function as a house-cleaning enzyme that removes non-canonical purine nucleotides from the nucleotide pool, thus preventing their incorporation into DNA/RNA and avoiding chromosomal lesions. The chain is dITP/XTP pyrophosphatase from Brucella melitensis biotype 1 (strain ATCC 23456 / CCUG 17765 / NCTC 10094 / 16M).